The primary structure comprises 1129 residues: Ubiquitin carboxyl-terminal hydrolase 15 (1129 aa).

Residues 1–26 (MVLSNVDAEEVNMDSSMELEESSQEP) form a disordered region. Over residues 7–23 (DAEEVNMDSSMELEESS) the composition is skewed to acidic residues. Positions 51 to 204 (HASYSWVVKN…NDEICISVTV (154 aa)) constitute an MATH domain. The USP domain occupies 230–545 (VGLKNQGATC…NAYMLVYFRK (316 aa)). Cysteine 239 serves as the catalytic Nucleophile. Histidine 481 acts as the Proton acceptor in catalysis.

Belongs to the peptidase C19 family.

The protein localises to the nucleus. It carries out the reaction Thiol-dependent hydrolysis of ester, thioester, amide, peptide and isopeptide bonds formed by the C-terminal Gly of ubiquitin (a 76-residue protein attached to proteins as an intracellular targeting signal).. Functionally, hydrolase that deubiquitinates target proteins. Cleaves the UBL propeptide in sde2. Involved in regulating the steady-state levels of proteins including prp4. The polypeptide is Ubiquitin carboxyl-terminal hydrolase 15 (Schizosaccharomyces pombe (strain 972 / ATCC 24843) (Fission yeast)).